A 126-amino-acid chain; its full sequence is uncharacterized protein (126 aa).

Phosphothreonine is present on Thr68.

This is an uncharacterized protein from Pseudomonas aeruginosa (strain UCBPP-PA14).